The primary structure comprises 265 residues: MLSLSEAIILGIVQGLAEWLPISSEGMTSLVMVTFFGRSLSEAIPISIWLHLGTLLAAIVYFREDVKVLLYGVPDYVRSFSRKQPHDPVISFLLISTALTGIVGLPLLLFVTDNVEISGGSATAVIGIMLIVTGILQRTVSRDESLSRVPGMSDSLVSGVAQGFAAIPGISRSGITMSALLLRKFDAADAIRLSFLMSIPAVLVAEIGVGLMGMVELDINSIVGLFFAFAFGLVTIDLFLKVAKKVDFSYFCIGLGVLSVLTMFL.

The next 7 helical transmembrane spans lie at 42-62, 90-110, 115-135, 160-182, 195-215, 222-242, and 245-265; these read EAIPISIWLHLGTLLAAIVYF, ISFLLISTALTGIVGLPLLLF, VEISGGSATAVIGIMLIVTGI, VAQGFAAIPGISRSGITMSALLL, FLMSIPAVLVAEIGVGLMGMV, IVGLFFAFAFGLVTIDLFLKV, and KVDFSYFCIGLGVLSVLTMFL.

Belongs to the UppP family.

The protein localises to the cell membrane. It carries out the reaction di-trans,octa-cis-undecaprenyl diphosphate + H2O = di-trans,octa-cis-undecaprenyl phosphate + phosphate + H(+). Catalyzes the dephosphorylation of undecaprenyl diphosphate (UPP). This chain is Undecaprenyl-diphosphatase, found in Methanococcoides burtonii (strain DSM 6242 / NBRC 107633 / OCM 468 / ACE-M).